Reading from the N-terminus, the 399-residue chain is Argininosuccinate synthase (399 aa).

12 to 20 (AFSGGLDTS) contacts ATP. Position 90 (tyrosine 90) interacts with L-citrulline. Glycine 120 contributes to the ATP binding site. 3 residues coordinate L-aspartate: threonine 122, asparagine 126, and aspartate 127. L-citrulline is bound at residue asparagine 126. The L-citrulline site is built by arginine 130, serine 175, glutamate 260, and tyrosine 272.

This sequence belongs to the argininosuccinate synthase family. Type 1 subfamily. In terms of assembly, homotetramer.

The protein resides in the cytoplasm. It carries out the reaction L-citrulline + L-aspartate + ATP = 2-(N(omega)-L-arginino)succinate + AMP + diphosphate + H(+). It participates in amino-acid biosynthesis; L-arginine biosynthesis; L-arginine from L-ornithine and carbamoyl phosphate: step 2/3. This is Argininosuccinate synthase from Methanothermobacter thermautotrophicus (strain ATCC 29096 / DSM 1053 / JCM 10044 / NBRC 100330 / Delta H) (Methanobacterium thermoautotrophicum).